Reading from the N-terminus, the 329-residue chain is GTP 3',8-cyclase (329 aa).

Residues 8–234 enclose the Radical SAM core domain; that stretch reads AFARKFYYLR…QIRQRSDGPA (227 aa). GTP is bound at residue Arg17. Cys24 and Cys28 together coordinate [4Fe-4S] cluster. Tyr30 contacts S-adenosyl-L-methionine. Cys31 contributes to the [4Fe-4S] cluster binding site. Arg68 lines the GTP pocket. Gly72 lines the S-adenosyl-L-methionine pocket. Thr99 serves as a coordination point for GTP. Residue Ser123 coordinates S-adenosyl-L-methionine. Residue Lys160 participates in GTP binding. Met194 is a binding site for S-adenosyl-L-methionine. [4Fe-4S] cluster is bound by residues Cys257 and Cys260. 262 to 264 lines the GTP pocket; sequence RLR. Cys274 lines the [4Fe-4S] cluster pocket.

This sequence belongs to the radical SAM superfamily. MoaA family. In terms of assembly, monomer and homodimer. [4Fe-4S] cluster is required as a cofactor.

The enzyme catalyses GTP + AH2 + S-adenosyl-L-methionine = (8S)-3',8-cyclo-7,8-dihydroguanosine 5'-triphosphate + 5'-deoxyadenosine + L-methionine + A + H(+). Its pathway is cofactor biosynthesis; molybdopterin biosynthesis. Catalyzes the cyclization of GTP to (8S)-3',8-cyclo-7,8-dihydroguanosine 5'-triphosphate. This chain is GTP 3',8-cyclase, found in Klebsiella pneumoniae subsp. pneumoniae (strain ATCC 700721 / MGH 78578).